A 227-amino-acid chain; its full sequence is Cytochrome c oxidase subunit 2 (227 aa).

Topologically, residues 1–14 are mitochondrial intermembrane; the sequence is MAYPFQLGFQDATS. The helical transmembrane segment at 15–45 threads the bilayer; that stretch reads PIMEELLHFHDHTLMIVFLISSLVLYIISLM. At 46–59 the chain is on the mitochondrial matrix side; sequence LTTKLTHTSTMDAQ. A helical transmembrane segment spans residues 60 to 87; that stretch reads EVETIWTILPAIILILIALPSLRILYMM. Over 88-227 the chain is Mitochondrial intermembrane; sequence DEINNPSLTV…YFEKWSASML (140 aa). Cu cation contacts are provided by histidine 161, cysteine 196, glutamate 198, cysteine 200, histidine 204, and methionine 207. Mg(2+) is bound at residue glutamate 198. Residue tyrosine 218 is modified to Phosphotyrosine.

It belongs to the cytochrome c oxidase subunit 2 family. In terms of assembly, component of the cytochrome c oxidase (complex IV, CIV), a multisubunit enzyme composed of 14 subunits. The complex is composed of a catalytic core of 3 subunits MT-CO1, MT-CO2 and MT-CO3, encoded in the mitochondrial DNA, and 11 supernumerary subunits COX4I, COX5A, COX5B, COX6A, COX6B, COX6C, COX7A, COX7B, COX7C, COX8 and NDUFA4, which are encoded in the nuclear genome. The complex exists as a monomer or a dimer and forms supercomplexes (SCs) in the inner mitochondrial membrane with NADH-ubiquinone oxidoreductase (complex I, CI) and ubiquinol-cytochrome c oxidoreductase (cytochrome b-c1 complex, complex III, CIII), resulting in different assemblies (supercomplex SCI(1)III(2)IV(1) and megacomplex MCI(2)III(2)IV(2)). Found in a complex with TMEM177, COA6, COX18, COX20, SCO1 and SCO2. Interacts with TMEM177 in a COX20-dependent manner. Interacts with COX20. Interacts with COX16. Cu cation serves as cofactor.

The protein localises to the mitochondrion inner membrane. The catalysed reaction is 4 Fe(II)-[cytochrome c] + O2 + 8 H(+)(in) = 4 Fe(III)-[cytochrome c] + 2 H2O + 4 H(+)(out). Its function is as follows. Component of the cytochrome c oxidase, the last enzyme in the mitochondrial electron transport chain which drives oxidative phosphorylation. The respiratory chain contains 3 multisubunit complexes succinate dehydrogenase (complex II, CII), ubiquinol-cytochrome c oxidoreductase (cytochrome b-c1 complex, complex III, CIII) and cytochrome c oxidase (complex IV, CIV), that cooperate to transfer electrons derived from NADH and succinate to molecular oxygen, creating an electrochemical gradient over the inner membrane that drives transmembrane transport and the ATP synthase. Cytochrome c oxidase is the component of the respiratory chain that catalyzes the reduction of oxygen to water. Electrons originating from reduced cytochrome c in the intermembrane space (IMS) are transferred via the dinuclear copper A center (CU(A)) of subunit 2 and heme A of subunit 1 to the active site in subunit 1, a binuclear center (BNC) formed by heme A3 and copper B (CU(B)). The BNC reduces molecular oxygen to 2 water molecules using 4 electrons from cytochrome c in the IMS and 4 protons from the mitochondrial matrix. This is Cytochrome c oxidase subunit 2 (MT-CO2) from Felis catus (Cat).